The chain runs to 140 residues: Ribonuclease P protein component (140 aa).

A disordered region spans residues 115-140; sequence RCKPGAPKPPPFKKRPNKSVKSNKQT.

It belongs to the RnpA family. As to quaternary structure, consists of a catalytic RNA component (M1 or rnpB) and a protein subunit.

It carries out the reaction Endonucleolytic cleavage of RNA, removing 5'-extranucleotides from tRNA precursor.. Its function is as follows. RNaseP catalyzes the removal of the 5'-leader sequence from pre-tRNA to produce the mature 5'-terminus. It can also cleave other RNA substrates such as 4.5S RNA. The protein component plays an auxiliary but essential role in vivo by binding to the 5'-leader sequence and broadening the substrate specificity of the ribozyme. The chain is Ribonuclease P protein component from Pseudoalteromonas translucida (strain TAC 125).